The sequence spans 446 residues: N-succinylarginine dihydrolase (446 aa).

Residues 19–28, N110, and 137–138 contribute to the substrate site; these read AGLSFGNVAS and HR. Residue E174 is part of the active site. R213 is a substrate binding site. H249 is an active-site residue. 2 residues coordinate substrate: D251 and N364. C370 serves as the catalytic Nucleophile.

The protein belongs to the succinylarginine dihydrolase family. In terms of assembly, homodimer.

It catalyses the reaction N(2)-succinyl-L-arginine + 2 H2O + 2 H(+) = N(2)-succinyl-L-ornithine + 2 NH4(+) + CO2. It participates in amino-acid degradation; L-arginine degradation via AST pathway; L-glutamate and succinate from L-arginine: step 2/5. Catalyzes the hydrolysis of N(2)-succinylarginine into N(2)-succinylornithine, ammonia and CO(2). In Burkholderia cenocepacia (strain HI2424), this protein is N-succinylarginine dihydrolase.